The chain runs to 341 residues: Ketol-acid reductoisomerase (NADP(+)) (341 aa).

The 182-residue stretch at 1 to 182 (MATIYYDKDA…GCTRAGVLET (182 aa)) folds into the KARI N-terminal Rossmann domain. Residues 25–28 (YGSQ), Ser51, Ser53, and 83–86 (DQTQ) each bind NADP(+). His108 is an active-site residue. Gly134 is a binding site for NADP(+). The KARI C-terminal knotted domain occupies 183-328 (TFKEETETDL…KRLRDMMSWI (146 aa)). Residues Asp191, Glu195, Glu227, and Glu231 each contribute to the Mg(2+) site. Residue Ser252 coordinates substrate.

The protein belongs to the ketol-acid reductoisomerase family. Mg(2+) is required as a cofactor.

The enzyme catalyses (2R)-2,3-dihydroxy-3-methylbutanoate + NADP(+) = (2S)-2-acetolactate + NADPH + H(+). The catalysed reaction is (2R,3R)-2,3-dihydroxy-3-methylpentanoate + NADP(+) = (S)-2-ethyl-2-hydroxy-3-oxobutanoate + NADPH + H(+). It functions in the pathway amino-acid biosynthesis; L-isoleucine biosynthesis; L-isoleucine from 2-oxobutanoate: step 2/4. It participates in amino-acid biosynthesis; L-valine biosynthesis; L-valine from pyruvate: step 2/4. Functionally, involved in the biosynthesis of branched-chain amino acids (BCAA). Catalyzes an alkyl-migration followed by a ketol-acid reduction of (S)-2-acetolactate (S2AL) to yield (R)-2,3-dihydroxy-isovalerate. In the isomerase reaction, S2AL is rearranged via a Mg-dependent methyl migration to produce 3-hydroxy-3-methyl-2-ketobutyrate (HMKB). In the reductase reaction, this 2-ketoacid undergoes a metal-dependent reduction by NADPH to yield (R)-2,3-dihydroxy-isovalerate. The protein is Ketol-acid reductoisomerase (NADP(+)) of Anaeromyxobacter sp. (strain K).